Consider the following 509-residue polypeptide: Dol-P-Glc:Glc(2)Man(9)GlcNAc(2)-PP-Dol alpha-1,2-glucosyltransferase (509 aa).

At M1–L4 the chain is on the cytoplasmic side. The chain crosses the membrane as a helical span at residues A5–V25. Topologically, residues P26–P57 are lumenal. Residues P58–M78 traverse the membrane as a helical segment. Residues E79–A99 are Cytoplasmic-facing. Residues V100 to L120 form a helical membrane-spanning segment. The Lumenal segment spans residues S121–K124. Residues A125–Y145 form a helical membrane-spanning segment. Topologically, residues Y146–S170 are cytoplasmic. A helical membrane pass occupies residues A171–V191. Residues A192–P285 are Lumenal-facing. The interval Q210–S254 is disordered. Polar residues-rich tracts occupy residues E215–S229 and S239–S254. A helical membrane pass occupies residues F286–G306. Over A307–H311 the chain is Cytoplasmic. The chain crosses the membrane as a helical span at residues V312 to A332. Over P333–S355 the chain is Lumenal. N351 carries an N-linked (GlcNAc...) asparagine glycan. The helical transmembrane segment at L356 to A376 threads the bilayer. The Cytoplasmic segment spans residues H377–W400. The chain crosses the membrane as a helical span at residues L401–L421. Residues A422 to T428 lie on the Lumenal side of the membrane. Residues W429–F449 form a helical membrane-spanning segment. Residues R450–T472 lie on the Cytoplasmic side of the membrane. A helical transmembrane segment spans residues W473–F493. Residues R494 to W509 are Lumenal-facing.

Belongs to the ALG10 glucosyltransferase family.

It localises to the endoplasmic reticulum membrane. It catalyses the reaction an alpha-D-Glc-(1-&gt;3)-alpha-D-Glc-(1-&gt;3)-alpha-D-Man-(1-&gt;2)-alpha-D-Man-(1-&gt;2)-alpha-D-Man-(1-&gt;3)-[alpha-D-Man-(1-&gt;2)-alpha-D-Man-(1-&gt;3)-[alpha-D-Man-(1-&gt;2)-alpha-D-Man-(1-&gt;6)]-alpha-D-Man-(1-&gt;6)]-beta-D-Man-(1-&gt;4)-beta-D-GlcNAc-(1-&gt;4)-alpha-D-GlcNAc-diphospho-di-trans,poly-cis-dolichol + a di-trans,poly-cis-dolichyl beta-D-glucosyl phosphate = a alpha-D-Glc-(1-&gt;2)-alpha-D-Glc-(1-&gt;3)-alpha-D-Glc-(1-&gt;3)-alpha-D-Man-(1-&gt;2)-alpha-D-Man-(1-&gt;2)-alpha-D-Man-(1-&gt;3)-[alpha-D-Man-(1-&gt;2)-alpha-D-Man-(1-&gt;3)-[alpha-D-Man-(1-&gt;2)-alpha-D-Man-(1-&gt;6)]-alpha-D-Man-(1-&gt;6)]-beta-D-Man-(1-&gt;4)-beta-D-GlcNAc-(1-&gt;4)-alpha-D-GlcNAc-diphospho-di-trans,poly-cis-dolichol + a di-trans,poly-cis-dolichyl phosphate + H(+). The protein operates within protein modification; protein glycosylation. Dol-P-Glc:Glc(2)Man(9)GlcNAc(2)-PP-Dol alpha-1,2-glucosyltransferase that operates in the biosynthetic pathway of dolichol-linked oligosaccharides, the glycan precursors employed in protein asparagine (N)-glycosylation. The assembly of dolichol-linked oligosaccharides begins on the cytosolic side of the endoplasmic reticulum membrane and finishes in its lumen. The sequential addition of sugars to dolichol pyrophosphate produces dolichol-linked oligosaccharides containing fourteen sugars, including two GlcNAcs, nine mannoses and three glucoses. Once assembled, the oligosaccharide is transferred from the lipid to nascent proteins by oligosaccharyltransferases. In the lumen of the endoplasmic reticulum, adds the third and last glucose residue from dolichyl phosphate glucose (Dol-P-Glc) onto the lipid-linked oligosaccharide intermediate Glc(2)Man(9)GlcNAc(2)-PP-Dol to produce Glc(3)Man(9)GlcNAc(2)-PP-Dol. In Arabidopsis thaliana (Mouse-ear cress), this protein is Dol-P-Glc:Glc(2)Man(9)GlcNAc(2)-PP-Dol alpha-1,2-glucosyltransferase.